A 603-amino-acid chain; its full sequence is Penicillin-binding protein activator LpoA (603 aa).

The N-terminal stretch at Met1–Ala26 is a signal peptide. Cys27 is lipidated: N-palmitoyl cysteine. Cys27 is lipidated: S-diacylglycerol cysteine.

This sequence belongs to the LpoA family. In terms of assembly, interacts with PBP1a.

It is found in the cell outer membrane. Regulator of peptidoglycan synthesis that is essential for the function of penicillin-binding protein 1A (PBP1a). The sequence is that of Penicillin-binding protein activator LpoA from Vibrio cholerae serotype O1 (strain ATCC 39541 / Classical Ogawa 395 / O395).